Consider the following 312-residue polypeptide: Polyprenyl transferase atnF (312 aa).

N9 is a glycosylation site (N-linked (GlcNAc...) asparagine). The next 9 helical transmembrane spans lie at 30–50 (LHTIEGLSTASIGWLALFFYA), 64–84 (FIGIFATYQMTHCVFCLWNDI), 111–131 (AMWVFVLGVFASMGVTYWLLG), 132–152 (ADVTLTMVPIWVLSFIYPLCK), 154–174 (IIWAPQVVLGLTMALCVLPPW), 185–205 (GLLPASLFGAIFCWLVYLDLI), 229–249 (YLKAGLTVLGVLQVVCFVLAA), 255–275 (GFLLWVFGIAVWSASVPWSIM), and 288–308 (IFLVNAILGIYMAAVSGLNVS).

Belongs to the UbiA prenyltransferase family. Mg(2+) is required as a cofactor.

It localises to the membrane. It participates in secondary metabolite biosynthesis; terpenoid biosynthesis. Its function is as follows. Polyprenyl transferase; part of the gene cluster that mediates the biosynthesis of the meroterpenoids arthripenoids. The pathway begins with the HR-PKS atnH that catalyzes two chain-extension steps to form a reduced triketide, which then primes the SAT domain in the NR-PKS atnG to initiate three more cycles of extension to give a linear hexaketide corresponding to the polyketide part of arthripenoids. The FAD-dependent monooxygenase atnJ then performs an oxidative decarboxylation at C11 of the atnH/atnG product, via an electrophilic aromatic hydroxylation with concomitant ipso-decarboxylation. The membrane-bound polyprenyl transferase atnF then introduces a farnesyl group before the FAD-dependent monooxygenase atnK functions as the first epoxidase on terminal C12'-C13' olefin, followed by a second epoxidation on C7'-C8' catalyzed by atnA. The terpene cyclase/mutase atnI then initiates the sequential tricyclic ring formation through protonation of the terminal epoxide and catalyzes the regioselective and stereoselective 6/6/6-tricyclic ring formation. The cytochrome P450 monooxygenase atnM is responsible for hydroxylating both C1' and C10'. The next steps may involve ketoreduction and acetyl transfer by the ketoreductase atnB and the acetyltransferase atnC, and lead to the production of arthripenoid B, the final biosynthetic product of the atn cluster. The hydroquinone moiety in arthripenoid B is prone to undergo spontaneous oxidation to afford a benzoquinone compound, a key intermediate for generating structure diversity. For instance, addition of a cysteine followed by ring contraction gives arthripenoid A, tautomerization gives the main product arthripenoid C, addition of a molecular of water or amine affords arthripenoid D or E, respectively, and loss of one water forms arthripenoid F. The protein is Polyprenyl transferase atnF of Arthrinium sp.